A 547-amino-acid polypeptide reads, in one-letter code: Chaperonin GroEL (547 aa).

ATP-binding positions include 30 to 33 (TLGP), Lys-51, 87 to 91 (DGTTT), Gly-415, and Asp-495.

This sequence belongs to the chaperonin (HSP60) family. Forms a cylinder of 14 subunits composed of two heptameric rings stacked back-to-back. Interacts with the co-chaperonin GroES.

The protein resides in the cytoplasm. It carries out the reaction ATP + H2O + a folded polypeptide = ADP + phosphate + an unfolded polypeptide.. Its function is as follows. Together with its co-chaperonin GroES, plays an essential role in assisting protein folding. The GroEL-GroES system forms a nano-cage that allows encapsulation of the non-native substrate proteins and provides a physical environment optimized to promote and accelerate protein folding. The polypeptide is Chaperonin GroEL (Thiobacillus denitrificans (strain ATCC 25259 / T1)).